The following is an 896-amino-acid chain: Alanine--tRNA ligase (896 aa).

Positions Gln439–Ser456 are enriched in basic and acidic residues. Positions Gln439–Arg459 are disordered. 4 residues coordinate Zn(2+): His579, His583, Cys681, and His685.

Belongs to the class-II aminoacyl-tRNA synthetase family. Zn(2+) serves as cofactor.

It is found in the cytoplasm. The enzyme catalyses tRNA(Ala) + L-alanine + ATP = L-alanyl-tRNA(Ala) + AMP + diphosphate. Catalyzes the attachment of alanine to tRNA(Ala) in a two-step reaction: alanine is first activated by ATP to form Ala-AMP and then transferred to the acceptor end of tRNA(Ala). Also edits incorrectly charged Ser-tRNA(Ala) and Gly-tRNA(Ala) via its editing domain. This Nocardioides sp. (strain ATCC BAA-499 / JS614) protein is Alanine--tRNA ligase.